The sequence spans 408 residues: Imidazolonepropionase (408 aa).

Residues His-73 and His-75 each contribute to the Fe(3+) site. His-73 and His-75 together coordinate Zn(2+). 4-imidazolone-5-propanoate is bound by residues Arg-82, Tyr-145, and His-178. Tyr-145 provides a ligand contact to N-formimidoyl-L-glutamate. His-243 provides a ligand contact to Fe(3+). His-243 contributes to the Zn(2+) binding site. Gln-246 is a binding site for 4-imidazolone-5-propanoate. Asp-318 contributes to the Fe(3+) binding site. A Zn(2+)-binding site is contributed by Asp-318. N-formimidoyl-L-glutamate contacts are provided by Asn-320 and Gly-322. Ser-323 is a 4-imidazolone-5-propanoate binding site.

Belongs to the metallo-dependent hydrolases superfamily. HutI family. It depends on Zn(2+) as a cofactor. The cofactor is Fe(3+).

It localises to the cytoplasm. It carries out the reaction 4-imidazolone-5-propanoate + H2O = N-formimidoyl-L-glutamate. The protein operates within amino-acid degradation; L-histidine degradation into L-glutamate; N-formimidoyl-L-glutamate from L-histidine: step 3/3. In terms of biological role, catalyzes the hydrolytic cleavage of the carbon-nitrogen bond in imidazolone-5-propanoate to yield N-formimidoyl-L-glutamate. It is the third step in the universal histidine degradation pathway. This Shewanella loihica (strain ATCC BAA-1088 / PV-4) protein is Imidazolonepropionase.